Here is a 409-residue protein sequence, read N- to C-terminus: Mitochondrial protein import protein MAS5 (409 aa).

Residues 1 to 172 form a necessary for HAP1 repression in the absence of heme region; sequence MVKETKFYDI…NGQGIKFVTR (172 aa). The region spanning 4 to 72 is the J domain; it reads ETKFYDILGV…RDIYDQFGED (69 aa). Substrate contacts are provided by residues isoleucine 116 and 135–137; that span reads LAL. A CR-type zinc finger spans residues 130–213; sequence GRTAKLALNK…CNGKKVENER (84 aa). Zn(2+)-binding residues include cysteine 143, cysteine 146, cysteine 159, cysteine 162, cysteine 185, and cysteine 188. CXXCXGXG motif repeat units lie at residues 143 to 150, 159 to 166, and 185 to 192; these read CKECEGRG, CTSCNGQG, and CDVCHGTG. Lysine 198 is covalently cross-linked (Glycyl lysine isopeptide (Lys-Gly) (interchain with G-Cter in ubiquitin)). Zn(2+) is bound by residues cysteine 201 and cysteine 204. A CXXCXGXG motif repeat occupies 201–208; the sequence is CKSCNGKK. Substrate is bound by residues 215–216 and 247–249; these read IL and VVF. Residues 382–409 form a disordered region; sequence RTRASRGGANYDSDEEEQGGEGVQCASQ. Cysteine 406 carries the post-translational modification Cysteine methyl ester. Residue cysteine 406 is the site of S-farnesyl cysteine attachment. A propeptide spans 407 to 409 (removed in mature form); the sequence is ASQ.

Homodimer. Interacts with HAP1. Component of the HMC including HAP1, SRO9 and YDJ1.

The protein localises to the cytoplasm. Its subcellular location is the perinuclear region. In terms of biological role, probably involved in mitochondrial protein import. Is also required for efficient translocation of pre-pro-alpha-factor. Involved in heme regulation of HAP1, as a component of the high-molecular-weight (HMC) complex. In Saccharomyces cerevisiae (strain ATCC 204508 / S288c) (Baker's yeast), this protein is Mitochondrial protein import protein MAS5 (YDJ1).